Reading from the N-terminus, the 162-residue chain is UPF0114 protein PA4574 (162 aa).

3 consecutive transmembrane segments (helical) span residues Y10–I32, L53–I75, and L136–L156.

Belongs to the UPF0114 family.

It localises to the cell membrane. The sequence is that of UPF0114 protein PA4574 from Pseudomonas aeruginosa (strain ATCC 15692 / DSM 22644 / CIP 104116 / JCM 14847 / LMG 12228 / 1C / PRS 101 / PAO1).